The chain runs to 117 residues: MTRVKRGYTARRRRKKIRLFASTFIGAHSRLTRTTTQQRMRALISSHRDRSRKKRDFRRLWITRINAVTREDRLFYSYSLFIHNLYKRQLLLNRKILAQIALSNKNCFDIISNKIIN.

The protein belongs to the bacterial ribosomal protein bL20 family.

The protein resides in the plastid. The protein localises to the chloroplast. Binds directly to 23S ribosomal RNA and is necessary for the in vitro assembly process of the 50S ribosomal subunit. It is not involved in the protein synthesizing functions of that subunit. The polypeptide is Large ribosomal subunit protein bL20c (Phalaenopsis aphrodite subsp. formosana (Moth orchid)).